The sequence spans 264 residues: Indolethylamine N-methyltransferase (264 aa).

Residue Lys-14 is modified to N6-succinyllysine. S-adenosyl-L-methionine is bound by residues Tyr-21, Tyr-26, 64–65, Tyr-70, Asp-86, and Asn-91; that span reads GS. Position 97 is an N6-succinyllysine (Lys-97). Residues 143 to 144 and Phe-164 each bind S-adenosyl-L-methionine; that span reads DV.

This sequence belongs to the class I-like SAM-binding methyltransferase superfamily. NNMT/PNMT/TEMT family. In terms of assembly, monomer. Detected in lung and liver (at protein level).

It localises to the cytoplasm. It catalyses the reaction a tertiary amine + S-adenosyl-L-methionine = a methylated tertiary amine + S-adenosyl-L-homocysteine + H(+). The enzyme catalyses a secondary amine + S-adenosyl-L-methionine = a methylated secondary amine + S-adenosyl-L-homocysteine + H(+). It carries out the reaction a primary amine + S-adenosyl-L-methionine = a methylated primary amine + S-adenosyl-L-homocysteine + H(+). The catalysed reaction is dimethyl sulfide + S-adenosyl-L-methionine = trimethylsulfonium + S-adenosyl-L-homocysteine. With respect to regulation, inhibited by the S-adenosyl-L-methionine analog sinefungin and by the product S-adenosyl-L-homocysteine. Functionally, catalyzes the N-methylation of tryptamine and structurally related compounds. Functions as a thioether S-methyltransferase and is active with a variety of thioethers and the corresponding selenium and tellurium compounds, including 3-methylthiopropionaldehyde, dimethyl selenide, dimethyl telluride, 2-methylthioethylamine, 2-methylthioethanol, methyl-n-propyl sulfide and diethyl sulfide. Plays an important role in the detoxification of selenium compounds. The protein is Indolethylamine N-methyltransferase (Inmt) of Mus musculus (Mouse).